The sequence spans 193 residues: Molybdenum cofactor guanylyltransferase (193 aa).

GTP is bound by residues 8–10 (LAG), K21, D67, and D98. Mg(2+) is bound at residue D98.

This sequence belongs to the MobA family. In terms of assembly, monomer. It depends on Mg(2+) as a cofactor.

It is found in the cytoplasm. The enzyme catalyses Mo-molybdopterin + GTP + H(+) = Mo-molybdopterin guanine dinucleotide + diphosphate. Transfers a GMP moiety from GTP to Mo-molybdopterin (Mo-MPT) cofactor (Moco or molybdenum cofactor) to form Mo-molybdopterin guanine dinucleotide (Mo-MGD) cofactor. The sequence is that of Molybdenum cofactor guanylyltransferase from Cereibacter sphaeroides (strain ATCC 17023 / DSM 158 / JCM 6121 / CCUG 31486 / LMG 2827 / NBRC 12203 / NCIMB 8253 / ATH 2.4.1.) (Rhodobacter sphaeroides).